Reading from the N-terminus, the 509-residue chain is Photosystem II CP47 reaction center protein (509 aa).

6 helical membrane passes run 21-36 (SVHL…WAGS), 101-115 (IVLS…VWHW), 140-156 (GIHL…FGAF), 203-218 (IAAG…FHLT), 237-252 (VLSS…AFVV), and 457-472 (VFAL…HGAR).

It belongs to the PsbB/PsbC family. PsbB subfamily. In terms of assembly, PSII is composed of 1 copy each of membrane proteins PsbA, PsbB, PsbC, PsbD, PsbE, PsbF, PsbH, PsbI, PsbJ, PsbK, PsbL, PsbM, PsbT, PsbX, PsbY, PsbZ, Psb30/Ycf12, peripheral proteins PsbO, CyanoQ (PsbQ), PsbU, PsbV and a large number of cofactors. It forms dimeric complexes. Binds multiple chlorophylls. PSII binds additional chlorophylls, carotenoids and specific lipids. is required as a cofactor.

It localises to the cellular thylakoid membrane. Its function is as follows. One of the components of the core complex of photosystem II (PSII). It binds chlorophyll and helps catalyze the primary light-induced photochemical processes of PSII. PSII is a light-driven water:plastoquinone oxidoreductase, using light energy to abstract electrons from H(2)O, generating O(2) and a proton gradient subsequently used for ATP formation. In Nostoc sp. (strain PCC 7120 / SAG 25.82 / UTEX 2576), this protein is Photosystem II CP47 reaction center protein.